The following is a 203-amino-acid chain: ATP-dependent Clp protease proteolytic subunit 1 (203 aa).

The Nucleophile role is filled by Ser101. Residue His126 is part of the active site.

The protein belongs to the peptidase S14 family. As to quaternary structure, fourteen ClpP subunits assemble into 2 heptameric rings which stack back to back to give a disk-like structure with a central cavity, resembling the structure of eukaryotic proteasomes.

It is found in the cytoplasm. The enzyme catalyses Hydrolysis of proteins to small peptides in the presence of ATP and magnesium. alpha-casein is the usual test substrate. In the absence of ATP, only oligopeptides shorter than five residues are hydrolyzed (such as succinyl-Leu-Tyr-|-NHMec, and Leu-Tyr-Leu-|-Tyr-Trp, in which cleavage of the -Tyr-|-Leu- and -Tyr-|-Trp bonds also occurs).. Cleaves peptides in various proteins in a process that requires ATP hydrolysis. Has a chymotrypsin-like activity. Plays a major role in the degradation of misfolded proteins. The protein is ATP-dependent Clp protease proteolytic subunit 1 of Synechococcus sp. (strain JA-3-3Ab) (Cyanobacteria bacterium Yellowstone A-Prime).